Consider the following 429-residue polypeptide: Ribosomal RNA small subunit methyltransferase B (429 aa).

S-adenosyl-L-methionine is bound by residues Cys-254–Lys-260, Asp-277, Asp-303, and Asp-322. Cys-375 serves as the catalytic Nucleophile.

It belongs to the class I-like SAM-binding methyltransferase superfamily. RsmB/NOP family.

The protein resides in the cytoplasm. The catalysed reaction is cytidine(967) in 16S rRNA + S-adenosyl-L-methionine = 5-methylcytidine(967) in 16S rRNA + S-adenosyl-L-homocysteine + H(+). In terms of biological role, specifically methylates the cytosine at position 967 (m5C967) of 16S rRNA. The protein is Ribosomal RNA small subunit methyltransferase B of Escherichia coli (strain SE11).